The chain runs to 112 residues: MGVKAYLDGILGEDKACKFLKKQGFEILKRNFHSKFGEIDIIAKKDEILHFIEVKFTQNDYEVSERLDRKKLEKILKTIEFYHLKNGISSDFQIDLICIKNDVIQFCENISF.

This sequence belongs to the UPF0102 family.

This Campylobacter jejuni subsp. jejuni serotype O:6 (strain 81116 / NCTC 11828) protein is UPF0102 protein C8J_0145.